The following is a 627-amino-acid chain: MRRPKKYESGEATQYISRRAALRKLQLSLNDFRRLCILKGVYPREPKHRRRAQKGSSEIKVLYHTKDIRFLLHESIVWTLRDYKIFAKKSNRDRAIKDFRNLKRRLALFPEIKLDHIVKERYPTFIDALKDLDDCLTLLFLFSTFPSLHLIPREQSNLCRRLTIEFLHYVIASKSLRKVFISIKGYYFQAEIKGQKVTWIVPHYYPFKPQSRQEVDFKVMSIFVEFYTIMLGFTNFRLFHGLNLAYPPQFPSSVLQDSEESLKDEASFVSDRIAALNFELLRTDKVQEDEEELDIDMELLEQDGDSKRIIKMKQEAQEVSRLRTLFKGLKFFINREVPREPLVILIRSFGGKVSWDSSIFAGSTYDEGDETITHQIVDRPSISTQYISRDYIQPQWVFDCVNQRQLLPTNKYFIGETLPPHLSPFVDSKRDSYIPPEEKALLDPSLIETHAQSDDDSEDEAQEEEETVDQELLDAQLQLAYQQETAEYKKYGGPDGVNEDEEDPEDEDDNEDDDEEEEELDEKTKRLQEEKQKMSVQSGKVHKVNKRQVHKAEVDEHRLQARMVKPRHRNLFRKLIREKQSKEKEEWLLRKKRRTIEASEKEARKTAKREARKEAAAAAAKASKLGK.

In terms of domain architecture, BRCT spans 321–414; sequence RLRTLFKGLK…QLLPTNKYFI (94 aa). Disordered stretches follow at residues 450-469, 488-566, and 595-627; these read HAQS…ETVD, YKKY…MVKP, and TIEA…KLGK. Phosphoserine occurs at positions 453 and 457. Acidic residues-rich tracts occupy residues 454–469 and 497–521; these read DDDS…ETVD and VNED…EELD. Residues 522–533 show a composition bias toward basic and acidic residues; sequence EKTKRLQEEKQK. The segment covering 540–549 has biased composition (basic residues); it reads KVHKVNKRQV. Composition is skewed to basic and acidic residues over residues 550–559 and 595–615; these read HKAEVDEHRL and TIEA…RKEA. Positions 582–625 form a coiled coil; the sequence is KEKEEWLLRKKRRTIEASEKEARKTAKREARKEAAAAAAKASKL. A compositionally biased stretch (low complexity) spans 616-627; that stretch reads AAAAAKASKLGK.

This sequence belongs to the pescadillo family.

The protein resides in the nucleus. Its subcellular location is the nucleolus. It localises to the nucleoplasm. Its function is as follows. Required for maturation of ribosomal RNAs and formation of the large ribosomal subunit. The protein is Pescadillo homolog of Drosophila simulans (Fruit fly).